Here is a 426-residue protein sequence, read N- to C-terminus: C4-dicarboxylate transport protein (426 aa).

A run of 8 helical transmembrane segments spans residues 4–24 (SIFT…ILLG), 44–64 (LIKM…IAGM), 76–96 (IALL…LVVV), 142–162 (IGAF…MFGF), 184–204 (VIFG…FGAM), 222–242 (LILC…GSIA), 326–346 (IWHQ…AAGV), and 352–372 (IVLA…LALI).

It belongs to the dicarboxylate/amino acid:cation symporter (DAACS) (TC 2.A.23) family.

It localises to the cell inner membrane. Responsible for the transport of dicarboxylates such as succinate, fumarate, and malate from the periplasm across the membrane. The polypeptide is C4-dicarboxylate transport protein (Edwardsiella ictaluri (strain 93-146)).